Here is a 349-residue protein sequence, read N- to C-terminus: TEGPYFYIPMSNATGIVRSPYEYPQYYLVYPAAYAVLGAYMFFLIIFGFPVNFLTLYVTIEHKKLRTPLNYILLNLAVADLFMVIGGFTTTIYTSMHGYFVLGRLGCNLEGFSATLGGMIGLWSLVVLAIERWVVVCKPMSNFRFGENHAIMGVTLTWVMGLACTVPPLVGWSRYIPEGMQCSCGIDYYTRAEGFNNDSYVLYMFVCHFLIPLVVIFFCYGRLLCAVKEAAAAQQESETTQRAEREVTRMVILMVIGFLVCWLPYASVAWYIFTHQGSEFGPLFMTIPAFFAKSSSIYNPVIYICMNKQFRQCMLTTLFCGKNPFEEEEGASSTKTEASSASSSSVSPA.

The Extracellular portion of the chain corresponds to 1 to 33; sequence TEGPYFYIPMSNATGIVRSPYEYPQYYLVYPAA. N-linked (GlcNAc...) asparagine glycosylation occurs at Asn-12. The chain crosses the membrane as a helical span at residues 34 to 58; that stretch reads YAVLGAYMFFLIIFGFPVNFLTLYV. The Cytoplasmic segment spans residues 59–70; it reads TIEHKKLRTPLN. A helical transmembrane segment spans residues 71–93; the sequence is YILLNLAVADLFMVIGGFTTTIY. The Extracellular portion of the chain corresponds to 94-107; it reads TSMHGYFVLGRLGC. A disulfide bridge connects residues Cys-107 and Cys-184. A helical transmembrane segment spans residues 108–130; that stretch reads NLEGFSATLGGMIGLWSLVVLAI. Residues 131–133 carry the 'Ionic lock' involved in activated form stabilization motif; sequence ERW. The Cytoplasmic portion of the chain corresponds to 131–149; that stretch reads ERWVVVCKPMSNFRFGENH. Residues 150 to 170 form a helical membrane-spanning segment; that stretch reads AIMGVTLTWVMGLACTVPPLV. Over 171–199 the chain is Extracellular; it reads GWSRYIPEGMQCSCGIDYYTRAEGFNNDS. An N-linked (GlcNAc...) asparagine glycan is attached at Asn-197. Residues 200–221 traverse the membrane as a helical segment; that stretch reads YVLYMFVCHFLIPLVVIFFCYG. Topologically, residues 222–249 are cytoplasmic; it reads RLLCAVKEAAAAQQESETTQRAEREVTR. The helical transmembrane segment at 250-271 threads the bilayer; that stretch reads MVILMVIGFLVCWLPYASVAWY. Residues 272–283 are Extracellular-facing; sequence IFTHQGSEFGPL. A helical membrane pass occupies residues 284-305; the sequence is FMTIPAFFAKSSSIYNPVIYIC. Lys-293 carries the N6-(retinylidene)lysine modification. Topologically, residues 306–349 are cytoplasmic; sequence MNKQFRQCMLTTLFCGKNPFEEEEGASSTKTEASSASSSSVSPA. The S-palmitoyl cysteine moiety is linked to residue Cys-320. The tract at residues 326-349 is disordered; it reads EEEEGASSTKTEASSASSSSVSPA. Low complexity predominate over residues 331 to 349; that stretch reads ASSTKTEASSASSSSVSPA.

The protein belongs to the G-protein coupled receptor 1 family. Opsin subfamily. Post-translationally, phosphorylated on some or all of the serine and threonine residues present in the C-terminal region. Contains one covalently linked retinal chromophore.

The protein localises to the membrane. It is found in the cell projection. Its subcellular location is the cilium. The protein resides in the photoreceptor outer segment. Its function is as follows. Photoreceptor required for image-forming vision at low light intensity. While most salt water fish species use retinal as chromophore, most freshwater fish use 3-dehydroretinal, or a mixture of retinal and 3-dehydroretinal. Light-induced isomerization of 11-cis to all-trans retinal triggers a conformational change that activates signaling via G-proteins. Subsequent receptor phosphorylation mediates displacement of the bound G-protein alpha subunit by arrestin and terminates signaling. In Myripristis violacea (Lattice soldierfish), this protein is Rhodopsin (rho).